The sequence spans 800 residues: DNA topoisomerase 4 subunit A (800 aa).

Residues 31–496 form the Topo IIA-type catalytic domain; that stretch reads LPDVRDGLKP…ISEIKIDKEV (466 aa). Tyrosine 119 functions as the O-(5'-phospho-DNA)-tyrosine intermediate in the catalytic mechanism.

This sequence belongs to the type II topoisomerase GyrA/ParC subunit family. ParC type 2 subfamily. Heterotetramer composed of ParC and ParE.

It localises to the cell membrane. The enzyme catalyses ATP-dependent breakage, passage and rejoining of double-stranded DNA.. In terms of biological role, topoisomerase IV is essential for chromosome segregation. It relaxes supercoiled DNA. Performs the decatenation events required during the replication of a circular DNA molecule. This chain is DNA topoisomerase 4 subunit A, found in Staphylococcus epidermidis (strain ATCC 12228 / FDA PCI 1200).